A 1041-amino-acid chain; its full sequence is Leucine-rich repeat receptor-like protein kinase TDR (1041 aa).

A signal peptide spans 1 to 29 (MKKKNISPSLVLHPLLLLLLPFFAFNSLA). Residues 30 to 652 (LKFSPQLLSL…HHKEERPKKT (623 aa)) are Extracellular-facing. An intrachain disulfide couples Cys69 to Cys76. 3 N-linked (GlcNAc...) asparagine glycosylation sites follow: Asn78, Asn92, and Asn111. 21 LRR repeats span residues 80-104 (TAQVISLDLSHRNLSGRIPIQIRYL), 105-128 (SSLLYLNLSGNSLEGSFPTSIFDL), 130-152 (KLTTLDISRNSFDSSFPPGISKL), 154-176 (FLKVFNAFSNNFEGLLPSDVSRL), 177-199 (RFLEELNFGGSYFEGEIPAAYGG), 200-224 (LQRLKFIHLAGNVLGGKLPPRLGLL), 225-248 (TELQHMEIGYNHFNGNIPSEFALL), 250-272 (NLKYFDVSNCSLSGSLPQELGNL), 273-296 (SNLETLFLFQNGFTGEIPESYSNL), 297-319 (KSLKLLDFSSNQLSGSIPSGFST), 321-344 (KNLTWLSLISNNLSGEVPEGIGEL), 345-368 (PELTTLFLWNNNFTGVLPHKLGSN), 369-392 (GKLETMDVSNNSFTGTIPSSLCHG), 394-416 (KLYKLILFSNMFEGELPKSLTRC), 418-439 (SLWRFRSQNNRLNGTIPIGFGS), 440-464 (LRNLTFVDLSNNRFTDQIPADFATA), 466-488 (VLQYLNLSTNFFHRKLPENIWKA), 511-535 (CKSFYRIELQGNSLNGTIPWDIGHC), 536-558 (EKLLCLNLSQNHLNGIIPWEIST), 559-583 (LPSIADVDLSHNLLTGTIPSDFGSS), and 585-607 (TITTFNVSYNQLIGPIPSGSFAH). Residues 186 to 188 (GSY) form a CLE peptide binding region. Positions 233 to 235 (GYN) are CLE peptide binding. Asn258 and Asn271 each carry an N-linked (GlcNAc...) asparagine glycan. The interval 303–307 (DFSSN) is CLE peptide binding. N-linked (GlcNAc...) asparagine glycans are attached at residues Asn322, Asn332, and Asn356. Residues 375–377 (DVS) are CLE peptide binding. Asn378 carries an N-linked (GlcNAc...) asparagine glycan. Cysteines 390 and 416 form a disulfide. The CLE peptide binding stretch occupies residues 421–423 (RFR). 5 N-linked (GlcNAc...) asparagine glycosylation sites follow: Asn430, Asn442, Asn471, Asn525, and Asn542. Cysteines 511 and 535 form a disulfide. Asn590 is a glycosylation site (N-linked (GlcNAc...) asparagine). A disulfide bridge links Cys620 with Cys628. The helical transmembrane segment at 653 to 673 (AGAIVWILAAAIGVGFFVLVA) threads the bilayer. Over 674–1041 (ATRCFQKSYG…HDVKCQRIGV (368 aa)) the chain is Cytoplasmic. Thr710 carries the phosphothreonine modification. One can recognise a Protein kinase domain in the interval 719 to 1001 (SKTDNILGMG…DVLLILQEAK (283 aa)). ATP contacts are provided by residues 725–733 (LGMGSTGTV) and Lys747. Residues Tyr798 and Tyr839 each carry the phosphotyrosine modification. Asp852 serves as the catalytic Proton acceptor. Position 884 is a phosphoserine (Ser884). Residues Tyr892 and Tyr899 each carry the phosphotyrosine modification. Residue Thr900 is modified to Phosphothreonine.

This sequence belongs to the protein kinase superfamily. Ser/Thr protein kinase family. In terms of assembly, interacts specifically with the mature peptides CLE41p and CLE44p, especially in the presence of SERK2. Interacts with LURE1.2. As to expression, widely expressed along the vascular strands. In roots and hypocotyls, confined to procambial cells.

It localises to the cell membrane. It catalyses the reaction L-seryl-[protein] + ATP = O-phospho-L-seryl-[protein] + ADP + H(+). The catalysed reaction is L-threonyl-[protein] + ATP = O-phospho-L-threonyl-[protein] + ADP + H(+). Acts with CLE41p and CLE44p peptides as a ligand-receptor pair in a signal transduction pathway involved in the regulation of procambium maintenance and polarity during vascular-tissue development. Mediates repression of tracheary element differentiation and the promotion of procambial cells formation and polar division adjacent to phloem cells in the veins. The polypeptide is Leucine-rich repeat receptor-like protein kinase TDR (Arabidopsis thaliana (Mouse-ear cress)).